The chain runs to 731 residues: DNA ligase (731 aa).

Residues Asp59–Asp63, Ser108–Leu109, and Glu142 contribute to the NAD(+) site. Lys144 functions as the N6-AMP-lysine intermediate in the catalytic mechanism. Residues Arg165, Glu202, Lys318, and Lys342 each contribute to the NAD(+) site. 4 residues coordinate Zn(2+): Cys434, Cys437, Cys452, and Cys458. Residues Leu645–Ile731 enclose the BRCT domain.

Belongs to the NAD-dependent DNA ligase family. LigA subfamily. Requires Mg(2+) as cofactor. Mn(2+) is required as a cofactor.

The catalysed reaction is NAD(+) + (deoxyribonucleotide)n-3'-hydroxyl + 5'-phospho-(deoxyribonucleotide)m = (deoxyribonucleotide)n+m + AMP + beta-nicotinamide D-nucleotide.. In terms of biological role, DNA ligase that catalyzes the formation of phosphodiester linkages between 5'-phosphoryl and 3'-hydroxyl groups in double-stranded DNA using NAD as a coenzyme and as the energy source for the reaction. It is essential for DNA replication and repair of damaged DNA. The chain is DNA ligase from Zymomonas mobilis subsp. mobilis (strain ATCC 31821 / ZM4 / CP4).